A 161-amino-acid chain; its full sequence is Endoribonuclease YbeY (161 aa).

Positions 121, 125, and 131 each coordinate Zn(2+).

The protein belongs to the endoribonuclease YbeY family. Zn(2+) serves as cofactor.

The protein localises to the cytoplasm. In terms of biological role, single strand-specific metallo-endoribonuclease involved in late-stage 70S ribosome quality control and in maturation of the 3' terminus of the 16S rRNA. This Xylella fastidiosa (strain M23) protein is Endoribonuclease YbeY.